Consider the following 789-residue polypeptide: uncharacterized protein (789 aa).

Disordered stretches follow at residues 107–326 (YQQD…NNNN), 426–491 (MLKS…NNNN), 523–625 (SVNF…ISNN), 666–751 (THTF…KGNN), and 765–789 (PTRF…YNQH). Acidic residues predominate over residues 113 to 123 (NNTDDEQEQEQ). Composition is skewed to low complexity over residues 124–141 (EQQQ…TPIK), 151–194 (TSQT…ITPI), 201–213 (SIST…LRSS), and 225–270 (TSST…THNS). Residues 274–290 (IDDDDGDNNDEINDEND) are compositionally biased toward acidic residues. Composition is skewed to low complexity over residues 291 to 326 (INSN…NNNN) and 429 to 491 (SNNS…NNNN). The span at 523–549 (SVNFDRNQNQKSPFLNNTSMPNINFNE) shows a compositional bias: polar residues. Low complexity-rich tracts occupy residues 550-581 (QSQQ…SINY), 602-617 (TSGS…NNSK), 696-722 (HIMN…SGSN), and 766-789 (TRFN…YNQH).

This is an uncharacterized protein from Dictyostelium discoideum (Social amoeba).